An 814-amino-acid chain; its full sequence is Echinoderm microtubule-associated protein-like 1 (814 aa).

Positions 31 to 72 (SMEISDRIASLEQRVQMQEDDIQLLKSALADVVRRLNITEEQ) form a coiled coil. Residues 77–185 (NRKGPTKARP…EPTFSPEEGY (109 aa)) form a disordered region. A compositionally biased stretch (polar residues) spans 92 to 101 (PLRTTVNNGT). Residues 103-115 (LPKKPSASLPSPS) are compositionally biased toward low complexity. Serine 113 carries the post-translational modification Phosphoserine. The segment covering 127–137 (KSINRTSSSER) has biased composition (polar residues). Residues 142 to 152 (GRRESSGDSKG) show a composition bias toward basic and acidic residues. Low complexity predominate over residues 155–167 (NRTGSTSSSSSGK). The tandem atypical propeller in EMLs stretch occupies residues 175-814 (KEPTFSPEEG…DTSIMQWRVI (640 aa)). WD repeat units lie at residues 260–309 (EQLQ…IWDS), 314–357 (TLHV…VWDW), 362–399 (RLAD…FWTL), 408–445 (QGLF…VWGK), 449–488 (RISY…SWNG), 492–529 (KLHK…LQGT), 534–571 (FTPI…LWDA), 577–612 (VWDK…VFDT), 616–654 (DLVT…IYGV), 663–700 (RVGK…YWVP), 708–767 (SVET…LFSY), and 774–813 (APSH…QWRV).

Belongs to the WD repeat EMAP family. Homotrimer; self-association is mediated by the N-terminal coiled coil. Does not interact with EML3. Binds repolymerizing microtubules. Binds unpolymerized tubulins via its WD repeat region. Interacts with TASOR.

It is found in the cytoplasm. The protein resides in the perinuclear region. The protein localises to the cytoskeleton. In terms of biological role, modulates the assembly and organization of the microtubule cytoskeleton, and probably plays a role in regulating the orientation of the mitotic spindle and the orientation of the plane of cell division. Required for normal proliferation of neuronal progenitor cells in the developing brain and for normal brain development. Does not affect neuron migration per se. The polypeptide is Echinoderm microtubule-associated protein-like 1 (Eml1) (Rattus norvegicus (Rat)).